The primary structure comprises 654 residues: Probable Xaa-Pro aminopeptidase P (654 aa).

4 residues coordinate Mn(2+): D451, D462, E560, and E574.

This sequence belongs to the peptidase M24B family. Mn(2+) serves as cofactor.

The catalysed reaction is Release of any N-terminal amino acid, including proline, that is linked to proline, even from a dipeptide or tripeptide.. Functionally, catalyzes the removal of a penultimate prolyl residue from the N-termini of peptides. The chain is Probable Xaa-Pro aminopeptidase P (ampp) from Botryotinia fuckeliana (strain B05.10) (Noble rot fungus).